The chain runs to 23 residues: Brevinin-1Eb (23 aa).

Cys17 and Cys23 are disulfide-bonded.

It belongs to the frog skin active peptide (FSAP) family. Brevinin subfamily. Expressed by the skin glands.

The protein localises to the secreted. Shows antibacterial activity against representative Gram-negative and Gram-positive bacterial species, and a very high hemolytic activity. This Pelophylax lessonae (Pool frog) protein is Brevinin-1Eb.